A 337-amino-acid chain; its full sequence is Na(+)/H(+) exchange regulatory cofactor NHE-RF2 (337 aa).

Residues 11–91 (LCRLVRGEQG…QTQLLVVDKE (81 aa)) enclose the PDZ 1 domain. The segment at 112 to 145 (LPPAHNPWEPKPDWACSGSLGSDTGQKDVNGPPR) is disordered. S130, S183, S186, S254, S269, S280, and S303 each carry phosphoserine. The 81-residue stretch at 151-231 (LCHLRRGPQG…EARLLVVDPE (81 aa)) folds into the PDZ 2 domain. The segment at 242 to 337 (VPTEEHVEGP…NRKREIFSNF (96 aa)) is disordered. The span at 255–275 (PVTNGTSPAQLNGGSVCSSRS) shows a compositional bias: polar residues. Positions 327–337 (WNRKREIFSNF) are enriched in basic and acidic residues.

In terms of assembly, homodimer, and heterodimer with NHERF1. Binds PDZK1. Interacts with SRY. Binds ADRB2, SLC9A3, P2RY1, P2YR2, RDX and LPAR2. Interacts with MCC. Found in a complex with EZR, PODXL and NHERF2. Interacts (via the PDZ domains) with PODXL (via the C-terminal PDZ-binding motif DTHL); interaction is detected in glomerular epithelium cells. Interacts with SGK1 and KCNJ1/ROMK1. Interacts (via the PDZ domains) with SLC26A6.

Its subcellular location is the endomembrane system. The protein resides in the nucleus. It is found in the apical cell membrane. Functionally, scaffold protein that connects plasma membrane proteins with members of the ezrin/moesin/radixin family and thereby helps to link them to the actin cytoskeleton and to regulate their surface expression. Necessary for cAMP-mediated phosphorylation and inhibition of SLC9A3. May also act as scaffold protein in the nucleus. The sequence is that of Na(+)/H(+) exchange regulatory cofactor NHE-RF2 (Nherf2) from Mus musculus (Mouse).